Here is a 242-residue protein sequence, read N- to C-terminus: 4-hydroxy-tetrahydrodipicolinate reductase (242 aa).

Residues 8–13, 75–77, and 99–102 contribute to the NAD(+) site; these read GAKGRM, GTT, and ATNM. The Proton donor/acceptor role is filled by histidine 131. Histidine 132 lines the (S)-2,3,4,5-tetrahydrodipicolinate pocket. The Proton donor role is filled by lysine 135. 141–142 is a binding site for (S)-2,3,4,5-tetrahydrodipicolinate; it reads GT.

It belongs to the DapB family.

The protein localises to the cytoplasm. It carries out the reaction (S)-2,3,4,5-tetrahydrodipicolinate + NAD(+) + H2O = (2S,4S)-4-hydroxy-2,3,4,5-tetrahydrodipicolinate + NADH + H(+). The catalysed reaction is (S)-2,3,4,5-tetrahydrodipicolinate + NADP(+) + H2O = (2S,4S)-4-hydroxy-2,3,4,5-tetrahydrodipicolinate + NADPH + H(+). Its pathway is amino-acid biosynthesis; L-lysine biosynthesis via DAP pathway; (S)-tetrahydrodipicolinate from L-aspartate: step 4/4. In terms of biological role, catalyzes the conversion of 4-hydroxy-tetrahydrodipicolinate (HTPA) to tetrahydrodipicolinate. This is 4-hydroxy-tetrahydrodipicolinate reductase from Campylobacter jejuni subsp. jejuni serotype O:2 (strain ATCC 700819 / NCTC 11168).